The primary structure comprises 262 residues: Phosphonates import ATP-binding protein PhnC (262 aa).

An ABC transporter domain is found at 5-253 (ICVEQLSKTF…RFDHLYRSIN (249 aa)). ATP is bound at residue 37-44 (GPSGSGKS).

Belongs to the ABC transporter superfamily. Phosphonates importer (TC 3.A.1.9.1) family. The complex is composed of two ATP-binding proteins (PhnC), two transmembrane proteins (PhnE) and a solute-binding protein (PhnD).

Its subcellular location is the cell inner membrane. It catalyses the reaction phosphonate(out) + ATP + H2O = phosphonate(in) + ADP + phosphate + H(+). Functionally, part of the ABC transporter complex PhnCDE involved in phosphonates import. Responsible for energy coupling to the transport system. This is Phosphonates import ATP-binding protein PhnC from Escherichia coli O157:H7.